We begin with the raw amino-acid sequence, 381 residues long: Succinyl-diaminopimelate desuccinylase (381 aa).

His68 serves as a coordination point for Zn(2+). Asp70 is an active-site residue. Asp101 is a Zn(2+) binding site. Catalysis depends on Glu135, which acts as the Proton acceptor. 3 residues coordinate Zn(2+): Glu136, Glu164, and His350.

The protein belongs to the peptidase M20A family. DapE subfamily. Homodimer. It depends on Zn(2+) as a cofactor. The cofactor is Co(2+).

It catalyses the reaction N-succinyl-(2S,6S)-2,6-diaminopimelate + H2O = (2S,6S)-2,6-diaminopimelate + succinate. Its pathway is amino-acid biosynthesis; L-lysine biosynthesis via DAP pathway; LL-2,6-diaminopimelate from (S)-tetrahydrodipicolinate (succinylase route): step 3/3. In terms of biological role, catalyzes the hydrolysis of N-succinyl-L,L-diaminopimelic acid (SDAP), forming succinate and LL-2,6-diaminopimelate (DAP), an intermediate involved in the bacterial biosynthesis of lysine and meso-diaminopimelic acid, an essential component of bacterial cell walls. The protein is Succinyl-diaminopimelate desuccinylase of Neisseria gonorrhoeae (strain NCCP11945).